Here is a 901-residue protein sequence, read N- to C-terminus: Nuclear factor of activated T-cells, cytoplasmic 4 (901 aa).

2 disordered regions span residues 15–179 (LVFG…LSSW) and 203–362 (NEAA…EDSV). The span at 61–81 (IPRPPPPRPGMHSPPPRPAPS) shows a compositional bias: pro residues. Residues 96–109 (GGPGGNAGGAGGGR) are compositionally biased toward gly residues. The tract at residues 114–119 (PSIRIT) is calcineurin-binding. The segment covering 114–123 (PSIRITSISP) has biased composition (low complexity). Residues 151–165 (GFGGYREAGGQGGGA) show a composition bias toward gly residues. Residues 166-179 (FFSPSPGSSSLSSW) show a composition bias toward low complexity. Phosphoserine; by MAPK7 and MAPK14 is present on residues serine 168 and serine 170. Residues serine 213 and serine 217 each carry the phosphoserine; by MAPK8 and MAPK9 modification. One copy of the SP 1 repeat lies at 213–229 (SPLPSPRASPRPWTPED). Residues 213-293 (SPLPSPRASP…LSRRGSLGEE (81 aa)) are 2 approximate SP repeats. 2 stretches are compositionally biased toward pro residues: residues 215 to 227 (LPSP…PWTP) and 254 to 263 (GPVPASPRPA). The short motif at 268–270 (KRR) is the Nuclear localization signal element. Low complexity predominate over residues 272–288 (SSSGTPSSASPALSRRG). One copy of the SP 2; approximate repeat lies at 277-293 (PSSASPALSRRGSLGEE). Phosphoserine is present on serine 289. Position 334 is a phosphoserine; by RPS6KA3 (serine 334). Serine 344 carries the post-translational modification Phosphoserine. The region spanning 401-582 (SALPPLDWPL…VPIECSQRSA (182 aa)) is the RHD domain. A DNA-binding region spans residues 430–437 (RAHYETEG). One can recognise an IPT/TIG domain in the interval 586 to 683 (PQVETYSPSA…KRSPTQSFKF (98 aa)). Positions 672 to 674 (RRK) match the Nuclear localization signal motif. Residue lysine 689 forms a Glycyl lysine isopeptide (Lys-Gly) (interchain with G-Cter in SUMO2) linkage. 2 disordered regions span residues 695-721 (DSSL…PRPP) and 827-869 (PQSA…FRDS).

In terms of assembly, member of the multicomponent NFATC transcription complex that consists of at least two components, a pre-existing cytoplasmic component NFATC2 and an inducible nuclear component NFATC1. Other NFAT proteins, such as NFATC3, or members of the activating protein-1 (AP-1) family and MAF can also bind the complex. NFAT proteins can bind DNA as monomers or dimers. Component of a promoter-binding complex composed of STAT3, NFATC3 and NFATC4; complex formation is enhanced by calcineurin. Interacts with CREBBP; this interaction potentiates transcription activation. Interacts with MAPK8/JNK1 and MAPK9/JNK2. Interacts with GATA4 (via the second Zn finger). Interacts (via N-terminus) with IRAK1 (via C-terminus). Interacts with RPS6KA3. Interacts with HOMER1, HOMER2 and HOMER3; this interaction competes with calcineurin/PPP3CA-binding and hence prevents NFATC4 dephosphorylation and activation. Interacts with ESR1 and ESR2; this interaction decreases NFATC4 transcriptional activity. Interacts with MTOR and MAPK7/ERK5. Interacts with TRIM17; this interaction prevents NFATC3 nuclear localization. Interacts with TCF25 (via C-terminus); the interaction leads to suppression of NFATC4 transcription factor activity and is reduced following stimulation with angiotensin-2. Post-translationally, phosphorylated by NFATC-kinases; dephosphorylated by calcineurin/PPP3CA. Phosphorylated on Ser-168 and Ser-170 by MTOR, IRAK1, MAPK7/ERK5 and MAPK14/p38, on Ser-213 and Ser-217 by MAPK8 and MAPK9, and on Ser-289 and Ser-344 by RPS6KA3. Phosphorylated by GSK3B. Phosphorylation by GSK3B markedly increases NFATC4 ubiquitination. Phosphorylation by MAPK8/JNK1, MAPK9/JNK2 and RPS6KA3 may stimulate NFATC4 transcriptional activity. Phosphorylation at Ser-168 and Ser-170 is stimulated by UV irradiation. In terms of processing, ubiquitinated, leading to degradation by the proteasome. Ubiquitination may be stimulated by GSK3B-dependent phosphorylation. Polyubiquitin linkage mainly occurs through 'Lys-48'. As to expression, widely expressed. In the brain, expressed in neurons. Expressed in the hippocampus (at protein level). In the hippocampus, expressed in both the CA1-CA3 pyramidal cells and the dentate gyrus granular cells. Expressed in a subset of hippocampal cells representing adult-born neurons (at protein level). Expressed in the submandibular gland (at protein level). In the olfactory system, expressed at low levels in the glomerular and granular layers and in the mitral cell layer. In the cerebellum, expressed at moderate levels in granular neurons. Expressed at moderate levels in the choroid plexus and ependymal cells. Expressed in neurons of the cochlear nucleus (at protein level). Expressed at low levels in the heart (at protein level). Expressed in ventricular cardiomyocytes (at protein level). Expressed in the lung.

The protein localises to the cytoplasm. It is found in the nucleus. Functionally, ca(2+)-regulated transcription factor that is involved in several processes, including the development and function of the immune, cardiovascular, musculoskeletal, and nervous systems. Involved in T-cell activation, stimulating the transcription of cytokine genes, including that of IL2 and IL4. Following JAK/STAT signaling activation and as part of a complex with NFATC3 and STAT3, binds to the alpha-beta E4 promoter region of CRYAB and activates transcription in cardiomyocytes. Along with NFATC3, involved in embryonic heart development. Involved in mitochondrial energy metabolism required for cardiac morphogenesis and function. Transactivates many genes involved in heart physiology. Along with GATA4, binds to and activates NPPB/BNP promoter. Activates NPPA/ANP/ANF and MYH7/beta-MHC transcription. Binds to and transactivates AGTR2 gene promoter. Involved in the regulation of adult hippocampal neurogenesis. Involved in BDNF-driven pro-survival signaling in hippocampal adult-born neurons. Involved in the formation of long-term spatial memory and long-term potentiation. In cochlear nucleus neurons, may play a role in deafferentation-induced apoptosis during a developmental critical period when auditory neurons depend on afferent input for survival. Binds to and activates the BACE1/Beta-secretase 1 promoter, hence may regulate the proteolytic processing of the amyloid precursor protein (APP). Plays a role in adipocyte differentiation. May be involved in myoblast differentiation into myotubes. Binds the consensus DNA sequence 5'-GGAAAAT-3'. In the presence of CREBBP, activates TNF transcription. Binds to PPARG gene promoter and regulates its activity. Binds to PPARG and REG3G gene promoters. This chain is Nuclear factor of activated T-cells, cytoplasmic 4, found in Mus musculus (Mouse).